A 173-amino-acid chain; its full sequence is NADH-ubiquinone oxidoreductase chain 6 (173 aa).

5 consecutive transmembrane segments (helical) span residues 1–21 (MTYL…AVAS), 24–44 (APYF…GVLV), 53–73 (LVLF…SAAL), 86–106 (SVVG…GVFW), and 139–159 (YGGG…FVVL).

This sequence belongs to the complex I subunit 6 family.

It is found in the mitochondrion membrane. The catalysed reaction is a ubiquinone + NADH + 5 H(+)(in) = a ubiquinol + NAD(+) + 4 H(+)(out). Functionally, core subunit of the mitochondrial membrane respiratory chain NADH dehydrogenase (Complex I) that is believed to belong to the minimal assembly required for catalysis. Complex I functions in the transfer of electrons from NADH to the respiratory chain. The immediate electron acceptor for the enzyme is believed to be ubiquinone. This Formosania lacustris (Oriental stream loach) protein is NADH-ubiquinone oxidoreductase chain 6 (MT-ND6).